Consider the following 471-residue polypeptide: Proline--tRNA ligase 2 (471 aa).

Belongs to the class-II aminoacyl-tRNA synthetase family. ProS type 3 subfamily. As to quaternary structure, homodimer.

The protein resides in the cytoplasm. The enzyme catalyses tRNA(Pro) + L-proline + ATP = L-prolyl-tRNA(Pro) + AMP + diphosphate. Functionally, catalyzes the attachment of proline to tRNA(Pro) in a two-step reaction: proline is first activated by ATP to form Pro-AMP and then transferred to the acceptor end of tRNA(Pro). This chain is Proline--tRNA ligase 2, found in Streptomyces avermitilis (strain ATCC 31267 / DSM 46492 / JCM 5070 / NBRC 14893 / NCIMB 12804 / NRRL 8165 / MA-4680).